The following is a 512-amino-acid chain: ADP,ATP carrier protein 4 (512 aa).

12 helical membrane passes run 34–54 (ISKF…QNLI), 71–91 (ISFL…VMYV), 102–122 (IFYL…YVIF), 157–177 (FSLF…LLFW), 192–212 (FYPL…HFLE), 231–251 (FHTL…IVSI), 296–316 (LIAT…GPWK), 330–350 (AAFI…FVLL), 361–381 (FTSA…FFAF), 390–410 (LIIA…IGAI), 448–468 (VIGT…IFII), and 476–496 (SISI…IWAT).

Belongs to the ADP/ATP translocase tlc family.

The protein resides in the cell membrane. Provides the rickettsial cell with host ATP in exchange for rickettsial ADP. This is an obligate exchange system. This energy acquiring activity is an important component of rickettsial parasitism. The polypeptide is ADP,ATP carrier protein 4 (tlcD) (Rickettsia typhi (strain ATCC VR-144 / Wilmington)).